A 166-amino-acid chain; its full sequence is Phosphopantetheine adenylyltransferase (166 aa).

Substrate is bound at residue serine 9. Residues 9 to 10 and histidine 17 contribute to the ATP site; that span reads SF. 3 residues coordinate substrate: lysine 41, threonine 74, and arginine 88. ATP-binding positions include 89–91, glutamate 99, and 124–130; these read GLR and DSFISSS.

It belongs to the bacterial CoaD family. Homohexamer. Mg(2+) is required as a cofactor.

The protein resides in the cytoplasm. The catalysed reaction is (R)-4'-phosphopantetheine + ATP + H(+) = 3'-dephospho-CoA + diphosphate. Its pathway is cofactor biosynthesis; coenzyme A biosynthesis; CoA from (R)-pantothenate: step 4/5. In terms of biological role, reversibly transfers an adenylyl group from ATP to 4'-phosphopantetheine, yielding dephospho-CoA (dPCoA) and pyrophosphate. In Lactobacillus johnsonii (strain CNCM I-12250 / La1 / NCC 533), this protein is Phosphopantetheine adenylyltransferase.